Consider the following 135-residue polypeptide: Nucleoside diphosphate kinase (135 aa).

ATP is bound by residues K9, F57, R85, T91, R102, and N112. H115 functions as the Pros-phosphohistidine intermediate in the catalytic mechanism.

The protein belongs to the NDK family. As to quaternary structure, homotetramer. Mg(2+) serves as cofactor.

It is found in the cytoplasm. The catalysed reaction is a 2'-deoxyribonucleoside 5'-diphosphate + ATP = a 2'-deoxyribonucleoside 5'-triphosphate + ADP. It carries out the reaction a ribonucleoside 5'-diphosphate + ATP = a ribonucleoside 5'-triphosphate + ADP. In terms of biological role, major role in the synthesis of nucleoside triphosphates other than ATP. The ATP gamma phosphate is transferred to the NDP beta phosphate via a ping-pong mechanism, using a phosphorylated active-site intermediate. The sequence is that of Nucleoside diphosphate kinase from Thermobifida fusca (strain YX).